Consider the following 101-residue polypeptide: Hg-scorpine-like-2 (101 aa).

Residues 1 to 17 (MKLTILILLVITSFCSC) form the signal peptide. Positions 60–100 (QQLCMFNKDVAGWCEKSCQQSAHQKGYCHGTKCKCGIPLNY) constitute a BetaSPN-type CS-alpha/beta domain. 3 disulfide bridges follow: C63–C87, C73–C92, and C77–C94.

Belongs to the long chain scorpion toxin family. Class 3 subfamily. As to expression, expressed by the venom gland.

The protein resides in the secreted. Functionally, inhibits voltage-gated potassium channels. This Hoffmannihadrurus gertschi (Scorpion) protein is Hg-scorpine-like-2.